The following is a 250-amino-acid chain: Putative (5-formylfuran-3-yl)methyl phosphate synthase (250 aa).

Catalysis depends on Lys-29, which acts as the Schiff-base intermediate with substrate. The active-site Proton acceptor is Lys-87.

This sequence belongs to the MfnB family.

The enzyme catalyses 2 D-glyceraldehyde 3-phosphate = 4-(hydroxymethyl)-2-furancarboxaldehyde phosphate + phosphate + 2 H2O. Catalyzes the formation of 4-(hydroxymethyl)-2-furancarboxaldehyde phosphate (4-HFC-P) from two molecules of glyceraldehyde-3-P (GA-3-P). The polypeptide is Putative (5-formylfuran-3-yl)methyl phosphate synthase (Streptomyces griseus subsp. griseus (strain JCM 4626 / CBS 651.72 / NBRC 13350 / KCC S-0626 / ISP 5235)).